We begin with the raw amino-acid sequence, 231 residues long: Large ribosomal subunit protein uL1 (231 aa).

Belongs to the universal ribosomal protein uL1 family. In terms of assembly, part of the 50S ribosomal subunit.

Functionally, binds directly to 23S rRNA. The L1 stalk is quite mobile in the ribosome, and is involved in E site tRNA release. Protein L1 is also a translational repressor protein, it controls the translation of the L11 operon by binding to its mRNA. This is Large ribosomal subunit protein uL1 from Pseudomonas syringae pv. syringae (strain B728a).